A 371-amino-acid chain; its full sequence is tRNA-specific 2-thiouridylase MnmA (371 aa).

Residues 13-20 (GMSGGVDS) and Met39 contribute to the ATP site. Positions 99–101 (NPD) are interaction with target base in tRNA. The Nucleophile role is filled by Cys104. A disulfide bridge links Cys104 with Cys200. Gly128 provides a ligand contact to ATP. The interaction with tRNA stretch occupies residues 150–152 (KDQ). Cys200 acts as the Cysteine persulfide intermediate in catalysis. Residues 308 to 309 (RY) are interaction with tRNA.

This sequence belongs to the MnmA/TRMU family.

It localises to the cytoplasm. It catalyses the reaction S-sulfanyl-L-cysteinyl-[protein] + uridine(34) in tRNA + AH2 + ATP = 2-thiouridine(34) in tRNA + L-cysteinyl-[protein] + A + AMP + diphosphate + H(+). Its function is as follows. Catalyzes the 2-thiolation of uridine at the wobble position (U34) of tRNA, leading to the formation of s(2)U34. The polypeptide is tRNA-specific 2-thiouridylase MnmA (Listeria welshimeri serovar 6b (strain ATCC 35897 / DSM 20650 / CCUG 15529 / CIP 8149 / NCTC 11857 / SLCC 5334 / V8)).